The primary structure comprises 891 residues: Nitrate reductase [NAD(P)H] (891 aa).

The interval 1-78 (MAASVEYNRQ…VKDPRDEATS (78 aa)) is disordered. The span at 63 to 76 (LDVEPSVKDPRDEA) shows a compositional bias: basic and acidic residues. Cys168 contacts Mo-molybdopterin. In terms of domain architecture, Cytochrome b5 heme-binding spans 515 to 590 (SAQFTMSEVR…LEMYRVGELI (76 aa)). Residues His550 and His573 each coordinate heme. In terms of domain architecture, FAD-binding FR-type spans 630 to 742 (REKVRCRLVD…KGPVGHIEYA (113 aa)). Residues 682 to 685 (RAYT), 699 to 703 (LIKIY), Phe704, Phe711, 716 to 718 (LMS), and Thr769 each bind FAD.

This sequence belongs to the nitrate reductase family. As to quaternary structure, homodimer. The cofactor is FAD. Heme is required as a cofactor. Mo-molybdopterin serves as cofactor.

It carries out the reaction nitrite + NAD(+) + H2O = nitrate + NADH + H(+). The catalysed reaction is nitrite + NADP(+) + H2O = nitrate + NADPH + H(+). Nitrate reductase is a key enzyme involved in the first step of nitrate assimilation in plants, fungi and bacteria. The polypeptide is Nitrate reductase [NAD(P)H] (NAR-7) (Hordeum vulgare (Barley)).